Consider the following 205-residue polypeptide: Fe/S biogenesis protein NfuA (205 aa).

[4Fe-4S] cluster-binding residues include Cys-162 and Cys-165.

This sequence belongs to the NfuA family. As to quaternary structure, homodimer. Requires [4Fe-4S] cluster as cofactor.

Its function is as follows. Involved in iron-sulfur cluster biogenesis. Binds a 4Fe-4S cluster, can transfer this cluster to apoproteins, and thereby intervenes in the maturation of Fe/S proteins. Could also act as a scaffold/chaperone for damaged Fe/S proteins. This is Fe/S biogenesis protein NfuA from Blochmanniella floridana.